A 322-amino-acid chain; its full sequence is Lipoyl synthase (322 aa).

The segment at Met-1 to Gln-24 is disordered. The segment covering Arg-14–Gln-24 has biased composition (basic and acidic residues). Positions 59, 64, 70, 85, 89, 92, and 298 each coordinate [4Fe-4S] cluster. The 217-residue stretch at Trp-71–Leu-287 folds into the Radical SAM core domain.

Belongs to the radical SAM superfamily. Lipoyl synthase family. [4Fe-4S] cluster is required as a cofactor.

The protein resides in the cytoplasm. The enzyme catalyses [[Fe-S] cluster scaffold protein carrying a second [4Fe-4S](2+) cluster] + N(6)-octanoyl-L-lysyl-[protein] + 2 oxidized [2Fe-2S]-[ferredoxin] + 2 S-adenosyl-L-methionine + 4 H(+) = [[Fe-S] cluster scaffold protein] + N(6)-[(R)-dihydrolipoyl]-L-lysyl-[protein] + 4 Fe(3+) + 2 hydrogen sulfide + 2 5'-deoxyadenosine + 2 L-methionine + 2 reduced [2Fe-2S]-[ferredoxin]. It participates in protein modification; protein lipoylation via endogenous pathway; protein N(6)-(lipoyl)lysine from octanoyl-[acyl-carrier-protein]: step 2/2. Functionally, catalyzes the radical-mediated insertion of two sulfur atoms into the C-6 and C-8 positions of the octanoyl moiety bound to the lipoyl domains of lipoate-dependent enzymes, thereby converting the octanoylated domains into lipoylated derivatives. The polypeptide is Lipoyl synthase (Chelativorans sp. (strain BNC1)).